A 61-amino-acid chain; its full sequence is Short neurotoxin 1 (61 aa).

Disulfide bonds link cysteine 3-cysteine 23, cysteine 17-cysteine 40, cysteine 42-cysteine 53, and cysteine 54-cysteine 59.

The protein belongs to the three-finger toxin family. Short-chain subfamily. Type I alpha-neurotoxin sub-subfamily. As to expression, expressed by the venom gland.

The protein resides in the secreted. Functionally, binds to muscle nicotinic acetylcholine receptor (nAChR) and inhibit acetylcholine from binding to the receptor, thereby impairing neuromuscular transmission. This chain is Short neurotoxin 1, found in Naja philippinensis (Philippine cobra).